The following is a 263-amino-acid chain: Hemophilin (263 aa).

Residues methionine 1–alanine 20 form the signal peptide. 4 residues coordinate heme b: histidine 42, tyrosine 58, serine 104, and histidine 105.

As to quaternary structure, monomer in solution. Interacts with host hemoglobin.

The protein resides in the secreted. Its function is as follows. Part of a high affinity heme acquisition system. Functions as a hemophore that acquires heme from human hemoglobin and delivers the heme to its cognate receptor, HphR, facilitating transport of heme across the bacterial outer membrane. Apo HphA interacts specifically with human hemoglobin and steals heme through a passive process probably due to its high affinity for heme. It can also acquire heme complexed to human serum albumin. Plays a supporting role for full virulence, acting as an accessory factor that enhances the process of heme uptake. The chain is Hemophilin from Acinetobacter baumannii.